A 205-amino-acid polypeptide reads, in one-letter code: CMRF35-like molecule 2 (205 aa).

Positions 1 to 17 (MWLLPALLLLCLSGCLS) are cleaved as a signal peptide. The 103-residue stretch at 18–120 (LKGPGSVTGT…VLDSWSRDPS (103 aa)) folds into the Ig-like V-type domain. At 18–173 (LKGPGSVTGT…NSGFRLSSPH (156 aa)) the chain is on the extracellular side. Cysteines 36 and 104 form a disulfide. Asn-154 carries an N-linked (GlcNAc...) asparagine glycan. A helical transmembrane segment spans residues 174 to 194 (FLLVVLLKLPLLLSMLGAVFW). Residues 195–205 (VNRPQWAPPGR) lie on the Cytoplasmic side of the membrane.

It belongs to the CD300 family. In terms of assembly, interacts with TYROBP. In terms of processing, N-glycosylated. In terms of tissue distribution, present on the surface of mature hematopoietic cells of the monocyte and myeloid lineages (at protein level).

It localises to the cell membrane. Functionally, probably acts as an activating receptor. The polypeptide is CMRF35-like molecule 2 (CD300E) (Homo sapiens (Human)).